The primary structure comprises 336 residues: Anthranilate phosphoribosyltransferase (336 aa).

5-phospho-alpha-D-ribose 1-diphosphate is bound by residues Gly-82, 85-86 (GD), Thr-90, 92-95 (NIST), 110-118 (KHGNRFASG), and Ser-122. Gly-82 provides a ligand contact to anthranilate. Ser-94 provides a ligand contact to Mg(2+). Residue Asn-113 participates in anthranilate binding. Arg-168 lines the anthranilate pocket. Asp-227 and Glu-228 together coordinate Mg(2+).

The protein belongs to the anthranilate phosphoribosyltransferase family. Homodimer. It depends on Mg(2+) as a cofactor.

The catalysed reaction is N-(5-phospho-beta-D-ribosyl)anthranilate + diphosphate = 5-phospho-alpha-D-ribose 1-diphosphate + anthranilate. The protein operates within amino-acid biosynthesis; L-tryptophan biosynthesis; L-tryptophan from chorismate: step 2/5. Catalyzes the transfer of the phosphoribosyl group of 5-phosphorylribose-1-pyrophosphate (PRPP) to anthranilate to yield N-(5'-phosphoribosyl)-anthranilate (PRA). This chain is Anthranilate phosphoribosyltransferase, found in Desulfitobacterium hafniense (strain Y51).